The primary structure comprises 250 residues: Small ribosomal subunit protein uS3 (250 aa).

Residues 16–85 form the KH type-2 domain; it reads IDEYLEKELE…NPQIEVKEVS (70 aa).

It belongs to the universal ribosomal protein uS3 family. In terms of assembly, part of the 30S ribosomal subunit.

Its function is as follows. Binds the lower part of the 30S subunit head. The sequence is that of Small ribosomal subunit protein uS3 from Methanobrevibacter smithii (strain ATCC 35061 / DSM 861 / OCM 144 / PS).